The primary structure comprises 89 residues: Large ribosomal subunit protein bL27 (89 aa).

Residues 1–26 (MAHKKAGGSSRNGRDSAGQRRGVKRF) are disordered.

It belongs to the bacterial ribosomal protein bL27 family.

The polypeptide is Large ribosomal subunit protein bL27 (Nitratidesulfovibrio vulgaris (strain DSM 19637 / Miyazaki F) (Desulfovibrio vulgaris)).